The chain runs to 430 residues: Gamma-glutamyl phosphate reductase (430 aa).

The protein belongs to the gamma-glutamyl phosphate reductase family.

It is found in the cytoplasm. It carries out the reaction L-glutamate 5-semialdehyde + phosphate + NADP(+) = L-glutamyl 5-phosphate + NADPH + H(+). Its pathway is amino-acid biosynthesis; L-proline biosynthesis; L-glutamate 5-semialdehyde from L-glutamate: step 2/2. Its function is as follows. Catalyzes the NADPH-dependent reduction of L-glutamate 5-phosphate into L-glutamate 5-semialdehyde and phosphate. The product spontaneously undergoes cyclization to form 1-pyrroline-5-carboxylate. The sequence is that of Gamma-glutamyl phosphate reductase from Rhodopseudomonas palustris (strain BisB5).